We begin with the raw amino-acid sequence, 231 residues long: Large ribosomal subunit protein uL1 (231 aa).

The protein belongs to the universal ribosomal protein uL1 family. Part of the 50S ribosomal subunit.

Functionally, binds directly to 23S rRNA. The L1 stalk is quite mobile in the ribosome, and is involved in E site tRNA release. Its function is as follows. Protein L1 is also a translational repressor protein, it controls the translation of the L11 operon by binding to its mRNA. The protein is Large ribosomal subunit protein uL1 of Agrobacterium fabrum (strain C58 / ATCC 33970) (Agrobacterium tumefaciens (strain C58)).